A 227-amino-acid polypeptide reads, in one-letter code: Prolactin (227 aa).

Positions 1-28 (MNIKGSPWKGSLLLLLVSNLLLCQSVAP) are cleaved as a signal peptide. Cysteines 32 and 39 form a disulfide. The residue at position 54 (serine 54) is a Phosphoserine. Asparagine 59 carries N-linked (GlcNAc...) asparagine; partial glycosylation. 4 positions are modified to phosphoserine: serine 62, serine 118, serine 163, and serine 194. Disulfide bonds link cysteine 86–cysteine 202 and cysteine 219–cysteine 227.

Belongs to the somatotropin/prolactin family. In terms of assembly, interacts with PRLR.

It is found in the secreted. Its function is as follows. Prolactin acts primarily on the mammary gland by promoting lactation. This Homo sapiens (Human) protein is Prolactin (PRL).